A 564-amino-acid polypeptide reads, in one-letter code: Proline--tRNA ligase (564 aa).

The protein belongs to the class-II aminoacyl-tRNA synthetase family. ProS type 1 subfamily. Homodimer.

The protein localises to the cytoplasm. It carries out the reaction tRNA(Pro) + L-proline + ATP = L-prolyl-tRNA(Pro) + AMP + diphosphate. Catalyzes the attachment of proline to tRNA(Pro) in a two-step reaction: proline is first activated by ATP to form Pro-AMP and then transferred to the acceptor end of tRNA(Pro). As ProRS can inadvertently accommodate and process non-cognate amino acids such as alanine and cysteine, to avoid such errors it has two additional distinct editing activities against alanine. One activity is designated as 'pretransfer' editing and involves the tRNA(Pro)-independent hydrolysis of activated Ala-AMP. The other activity is designated 'posttransfer' editing and involves deacylation of mischarged Ala-tRNA(Pro). The misacylated Cys-tRNA(Pro) is not edited by ProRS. In Coxiella burnetii (strain RSA 331 / Henzerling II), this protein is Proline--tRNA ligase.